Here is an 80-residue protein sequence, read N- to C-terminus: uncharacterized protein (80 aa).

This is an uncharacterized protein from Pseudoalteromonas phage PM2 (Bacteriophage PM2).